Reading from the N-terminus, the 780-residue chain is Copper-exporting P-type ATPase (780 aa).

One can recognise an HMA domain in the interval 2–67 (QRIQLNITGM…AVRRAALCTD (66 aa)). Cu(+) contacts are provided by Cys13 and Cys16. Transmembrane regions (helical) follow at residues 89–109 (LAVAAALFVPLAHLSVMFAVL), 114–134 (FPGWEWMLTALAIPVVTWAAW), 153–173 (TLISTGITAATIWSLYTVFGH), 185–205 (ALLGSDAIYFEVAAGITVFVL), 348–368 (VFVPCVFAVAALTAVGWLIAG), and 374–394 (VFSAAIAVLVIACPCALGLAT). Residue Asp430 is the 4-aspartylphosphate intermediate of the active site. 2 helical membrane-spanning segments follow: residues 680–698 (FNMVWAFGYNIAAIPIAAA) and 704–722 (LVAGAAMAFSSFFVVSNSL).

It belongs to the cation transport ATPase (P-type) (TC 3.A.3) family. Type IB subfamily.

The protein localises to the cell membrane. The enzyme catalyses Cu(+)(in) + ATP + H2O = Cu(+)(out) + ADP + phosphate + H(+). Functionally, involved in copper export. The chain is Copper-exporting P-type ATPase (ctpA) from Mycobacterium leprae (strain TN).